We begin with the raw amino-acid sequence, 780 residues long: LPS-assembly protein LptD (780 aa).

The N-terminal stretch at 1 to 24 is a signal peptide; that stretch reads MKKRLPTLLASLIGSALYSQQALA.

The protein belongs to the LptD family. Component of the lipopolysaccharide transport and assembly complex. Interacts with LptE and LptA.

It localises to the cell outer membrane. Functionally, together with LptE, is involved in the assembly of lipopolysaccharide (LPS) at the surface of the outer membrane. The chain is LPS-assembly protein LptD from Sodalis glossinidius (strain morsitans).